A 187-amino-acid polypeptide reads, in one-letter code: UPF0340 protein SPT_0687 (187 aa).

This sequence belongs to the UPF0340 family.

This chain is UPF0340 protein SPT_0687, found in Streptococcus pneumoniae (strain Taiwan19F-14).